A 467-amino-acid chain; its full sequence is Asparagine--tRNA ligase (467 aa).

Belongs to the class-II aminoacyl-tRNA synthetase family. In terms of assembly, homodimer.

Its subcellular location is the cytoplasm. It carries out the reaction tRNA(Asn) + L-asparagine + ATP = L-asparaginyl-tRNA(Asn) + AMP + diphosphate + H(+). The sequence is that of Asparagine--tRNA ligase from Bacteroides fragilis (strain YCH46).